The sequence spans 373 residues: NADPH-dependent 3-keto-steroid reductase Hsd3b5 (373 aa).

NADP(+)-binding positions include 10-15, Tyr-155, and Lys-159; that span reads GAGGFL. Lys-159 acts as the Proton donor in catalysis. A helical transmembrane segment spans residues 288 to 308; the sequence is LPLLYWLAFLLETVSFLLRPF. N6-acetyllysine is present on Lys-350.

It belongs to the 3-beta-HSD family. Expressed predominantly in male liver.

The protein localises to the endoplasmic reticulum membrane. It localises to the mitochondrion membrane. It carries out the reaction a 3beta-hydroxysteroid + NADP(+) = a 3-oxosteroid + NADPH + H(+). The catalysed reaction is 5alpha-androstane-3beta,17beta-diol + NADP(+) = 17beta-hydroxy-5alpha-androstan-3-one + NADPH + H(+). It catalyses the reaction 3beta-hydroxy-5alpha-androstan-17-one + NADP(+) = 5alpha-androstan-3,17-dione + NADPH + H(+). It functions in the pathway steroid metabolism. In terms of biological role, responsible for the reduction of the oxo group on the C-3 of 5alpha-androstane steroids. Catalyzes the conversion of dihydrotestosterone to its inactive form 5alpha-androstanediol, that does not bind androgen receptor/AR. Also converts androstanedione, a precursor of testosterone and estrone, to epiandrosterone. Does not function as an isomerase. This chain is NADPH-dependent 3-keto-steroid reductase Hsd3b5, found in Rattus norvegicus (Rat).